The following is a 321-amino-acid chain: Ferrochelatase (321 aa).

Fe cation is bound by residues His194 and Glu275.

Belongs to the ferrochelatase family.

The protein resides in the cytoplasm. The enzyme catalyses heme b + 2 H(+) = protoporphyrin IX + Fe(2+). The protein operates within porphyrin-containing compound metabolism; protoheme biosynthesis; protoheme from protoporphyrin-IX: step 1/1. Functionally, catalyzes the ferrous insertion into protoporphyrin IX. The sequence is that of Ferrochelatase from Wigglesworthia glossinidia brevipalpis.